The sequence spans 827 residues: Carnosine synthase 1 (827 aa).

The ATP-grasp domain occupies 516–720 (GPPWPSTSLH…LLLASTMVAC (205 aa)). 542–611 (IYQVPLPGVM…MEFVEGTEHD (70 aa)) is a binding site for ATP. Mg(2+) is bound by residues glutamate 677, glutamate 689, and asparagine 691. The Mn(2+) site is built by glutamate 677, glutamate 689, and asparagine 691.

Homotetramer. Mg(2+) is required as a cofactor. The cofactor is Mn(2+).

The catalysed reaction is beta-alanine + L-histidine + ATP = carnosine + ADP + phosphate + H(+). The enzyme catalyses 4-aminobutanoate + L-histidine + ATP = L-homocarnosine + ADP + phosphate + H(+). Functionally, catalyzes the synthesis of carnosine and homocarnosine. Carnosine is synthesized more efficiently than homocarnosine. This chain is Carnosine synthase 1, found in Mus musculus (Mouse).